The primary structure comprises 476 residues: Fatty acid hydroperoxide lyase, chloroplastic (476 aa).

Residues 280–300 (LLFILGFNAFGGFSIFLPTLL) traverse the membrane as a helical segment. Cys-438 provides a ligand contact to heme.

This sequence belongs to the cytochrome P450 family. Heme is required as a cofactor. As to expression, highly expressed in developing flowers and in young leaves. Detected in stems and immature green fruits, but not in mature green and red fruits.

It is found in the plastid. It localises to the chloroplast outer membrane. Reversibly inhibited by nordihydroguaiaretic acid (NDGA) and irreversibly by salicylic acid. Its function is as follows. Cytochrome P450 of the CYP74B subfamily involved in the biosynthesis of traumatin and C6 aldehydes. Metabolizes 13- but not 9-hydroperoxides of linoleic and linolenic acids. Can use 15S-hydroperoxy-11(Z),13(E),17(Z)-eicosatrienoic acid (15-HPET) and 13S-hydroperoxy-9(Z),11(E),15(Z)-octadecatrienoic acid (13-HPOT) as substrates, but only 5% activity with 13S-hydroperoxy-9(Z),11(E)-octadecadienoic acid (13-HPOD). Produces n-hexanal and 12-oxo-9(Z)-dodecanoic acid from 13-HPOD. The polypeptide is Fatty acid hydroperoxide lyase, chloroplastic (Solanum lycopersicum (Tomato)).